A 319-amino-acid polypeptide reads, in one-letter code: MKRIGVLTSGGDSPGMNAAIRAVVRKAIYHDLEVYGIKNGYQGLMDGNIEKMTLGSVGDIIHRGGTILFSARSEEFKTDEGQFRAIEQLNKHNIDGLVVIGGDGSFQGAKKLTEKGFPCIGVPGTIDNDIAGTDYTIGFDTSLNTIIDAVDKVRDTATSHERTYIIEVMGRDAGDLALWAGLAVGAESILIPEEKEDFSSIVQRLKNGHDRGKKHSIILLAEGVGSGFEFGKRIEEVAELETRVTVLGHIQRGGSPTGQDRVLASRLGARAIELLIDNQGGRMVGIQKNVLVDYTFDEVFNVEHTIDKGMYKLSKELSI.

Gly-11 lines the ATP pocket. 21-25 contributes to the ADP binding site; sequence RAVVR. ATP contacts are provided by residues 72–73 and 102–105; these read RS and GDGS. Asp-103 is a Mg(2+) binding site. Residue 125–127 coordinates substrate; sequence TID. Residue Asp-127 is the Proton acceptor of the active site. Residue Arg-154 coordinates ADP. Residues Arg-162 and 169 to 171 contribute to the substrate site; that span reads MGR. ADP contacts are provided by residues 185–187, Arg-211, and 213–215; these read GAE and KKH. Residues Glu-222, Arg-243, and 249-252 contribute to the substrate site; that span reads HIQR.

The protein belongs to the phosphofructokinase type A (PFKA) family. ATP-dependent PFK group I subfamily. Prokaryotic clade 'B1' sub-subfamily. In terms of assembly, homotetramer. Mg(2+) serves as cofactor.

It localises to the cytoplasm. The enzyme catalyses beta-D-fructose 6-phosphate + ATP = beta-D-fructose 1,6-bisphosphate + ADP + H(+). Its pathway is carbohydrate degradation; glycolysis; D-glyceraldehyde 3-phosphate and glycerone phosphate from D-glucose: step 3/4. With respect to regulation, allosterically activated by ADP and other diphosphonucleosides, and allosterically inhibited by phosphoenolpyruvate. Catalyzes the phosphorylation of D-fructose 6-phosphate to fructose 1,6-bisphosphate by ATP, the first committing step of glycolysis. The protein is ATP-dependent 6-phosphofructokinase of Oceanobacillus iheyensis (strain DSM 14371 / CIP 107618 / JCM 11309 / KCTC 3954 / HTE831).